The primary structure comprises 308 residues: Protoheme IX farnesyltransferase (308 aa).

Helical transmembrane passes span 20–40 (VLAY…VTAI), 53–73 (PLLI…ANTF), 102–122 (NALV…WWTT), 124–144 (LLSG…YTLL), 149–169 (TSQN…IGWS), 170–190 (AITD…FFWT), 227–249 (LIYT…WLYM), 254–276 (VAGA…GEPV), and 288–308 (YLAV…PTLF).

The protein belongs to the UbiA prenyltransferase family. Protoheme IX farnesyltransferase subfamily.

The protein localises to the cell membrane. It carries out the reaction heme b + (2E,6E)-farnesyl diphosphate + H2O = Fe(II)-heme o + diphosphate. Its pathway is porphyrin-containing compound metabolism; heme O biosynthesis; heme O from protoheme: step 1/1. Functionally, converts heme B (protoheme IX) to heme O by substitution of the vinyl group on carbon 2 of heme B porphyrin ring with a hydroxyethyl farnesyl side group. This chain is Protoheme IX farnesyltransferase, found in Mycobacterium leprae (strain TN).